Here is a 154-residue protein sequence, read N- to C-terminus: Crossover junction endodeoxyribonuclease RuvC (154 aa).

Residues Asp7, Glu67, and Asp139 contribute to the active site. Mg(2+) is bound by residues Asp7, Glu67, and Asp139.

Belongs to the RuvC family. As to quaternary structure, homodimer which binds Holliday junction (HJ) DNA. The HJ becomes 2-fold symmetrical on binding to RuvC with unstacked arms; it has a different conformation from HJ DNA in complex with RuvA. In the full resolvosome a probable DNA-RuvA(4)-RuvB(12)-RuvC(2) complex forms which resolves the HJ. The cofactor is Mg(2+).

The protein resides in the cytoplasm. It carries out the reaction Endonucleolytic cleavage at a junction such as a reciprocal single-stranded crossover between two homologous DNA duplexes (Holliday junction).. In terms of biological role, the RuvA-RuvB-RuvC complex processes Holliday junction (HJ) DNA during genetic recombination and DNA repair. Endonuclease that resolves HJ intermediates. Cleaves cruciform DNA by making single-stranded nicks across the HJ at symmetrical positions within the homologous arms, yielding a 5'-phosphate and a 3'-hydroxyl group; requires a central core of homology in the junction. The consensus cleavage sequence is 5'-(A/T)TT(C/G)-3'. Cleavage occurs on the 3'-side of the TT dinucleotide at the point of strand exchange. HJ branch migration catalyzed by RuvA-RuvB allows RuvC to scan DNA until it finds its consensus sequence, where it cleaves and resolves the cruciform DNA. The sequence is that of Crossover junction endodeoxyribonuclease RuvC from Synechococcus sp. (strain WH7803).